The sequence spans 270 residues: Phospholysine phosphohistidine inorganic pyrophosphate phosphatase (270 aa).

The Mg(2+) site is built by Asp-17 and Ser-19. Residues 17 to 19 (DIS), 54 to 55 (TN), and Lys-189 each bind substrate. Asp-214 serves as a coordination point for Mg(2+).

This sequence belongs to the HAD-like hydrolase superfamily. As to quaternary structure, homodimer. Mg(2+) is required as a cofactor.

It localises to the cytoplasm. The protein localises to the nucleus. It carries out the reaction diphosphate + H2O = 2 phosphate + H(+). Functionally, phosphatase that hydrolyzes imidodiphosphate, 3-phosphohistidine and 6-phospholysine. Has broad substrate specificity and can also hydrolyze inorganic diphosphate, but with lower efficiency. The chain is Phospholysine phosphohistidine inorganic pyrophosphate phosphatase (Lhpp) from Rattus norvegicus (Rat).